Here is a 317-residue protein sequence, read N- to C-terminus: Metaxin-1 (317 aa).

Residues K38, K41, and K78 each participate in a glycyl lysine isopeptide (Lys-Gly) (interchain with G-Cter in ubiquitin) cross-link. A helical membrane pass occupies residues 164–184 (EELEKELYQEAQECLTLLSQR).

It belongs to the metaxin family. As to quaternary structure, interacts with MTX2/metaxin-2. Associates with the mitochondrial contact site and cristae organizing system (MICOS) complex, composed of at least MICOS10/MIC10, CHCHD3/MIC19, CHCHD6/MIC25, APOOL/MIC27, IMMT/MIC60, APOO/MIC23/MIC26 and QIL1/MIC13. This complex was also known under the names MINOS or MitOS complex. The MICOS complex associates with mitochondrial outer membrane proteins SAMM50, MTX1 and MTX2 (together described as components of the mitochondrial outer membrane sorting assembly machinery (SAM) complex) and DNAJC11, mitochondrial inner membrane protein TMEM11 and with HSPA9. The MICOS and SAM complexes together with DNAJC11 are part of a large protein complex spanning both membranes termed the mitochondrial intermembrane space bridging (MIB) complex. Interacts with ARMC1. Ubiquitinated by PRKN during mitophagy, leading to its degradation and enhancement of mitophagy. Deubiquitinated by USP30.

The protein localises to the mitochondrion outer membrane. In terms of biological role, involved in transport of proteins into the mitochondrion. Essential for embryonic development. The protein is Metaxin-1 (MTX1) of Bos taurus (Bovine).